Consider the following 454-residue polypeptide: UDP-N-acetylmuramate--L-alanine ligase (454 aa).

ATP is bound at residue 112 to 118; it reads GTHGKTT.

This sequence belongs to the MurCDEF family.

It localises to the cytoplasm. The catalysed reaction is UDP-N-acetyl-alpha-D-muramate + L-alanine + ATP = UDP-N-acetyl-alpha-D-muramoyl-L-alanine + ADP + phosphate + H(+). Its pathway is cell wall biogenesis; peptidoglycan biosynthesis. Cell wall formation. The protein is UDP-N-acetylmuramate--L-alanine ligase of Nitratidesulfovibrio vulgaris (strain ATCC 29579 / DSM 644 / CCUG 34227 / NCIMB 8303 / VKM B-1760 / Hildenborough) (Desulfovibrio vulgaris).